Reading from the N-terminus, the 164-residue chain is Ecotin (164 aa).

The signal sequence occupies residues 1–20 (MKMFVPAVVFAALASASAWA). A disulfide bridge links Cys72 with Cys109.

It belongs to the protease inhibitor I11 (ecotin) family. In terms of assembly, homodimer.

It is found in the periplasm. In terms of biological role, general inhibitor of pancreatic serine proteases: inhibits chymotrypsin, trypsin, elastases, factor X, kallikrein as well as a variety of other proteases. The sequence is that of Ecotin from Salmonella typhi.